The sequence spans 105 residues: Large ribosomal subunit protein eL30 (105 aa).

Belongs to the eukaryotic ribosomal protein eL30 family.

The protein is Large ribosomal subunit protein eL30 (RPL30) of Eremothecium gossypii (strain ATCC 10895 / CBS 109.51 / FGSC 9923 / NRRL Y-1056) (Yeast).